The sequence spans 276 residues: Undecaprenyl-diphosphatase (276 aa).

The next 7 helical transmembrane spans lie at 48–68 (AANSFKVVIQLGSILAVAIVF), 92–112 (LSIAQIAVGLVPAAVLGFLFE), 119–139 (LFSVKTVAIGLIAGAILMLFA), 155–175 (ISYKQAIAVGLFQCLSLWPGF), 196–216 (ADFTFIMAMPIMMGASFLSLV), 225–245 (DLMPFFIVGFICAFVVALFVV), and 255–275 (IKLVPFAIYRIILGVILLLIM).

The protein belongs to the UppP family.

It localises to the cell membrane. It carries out the reaction di-trans,octa-cis-undecaprenyl diphosphate + H2O = di-trans,octa-cis-undecaprenyl phosphate + phosphate + H(+). In terms of biological role, catalyzes the dephosphorylation of undecaprenyl diphosphate (UPP). Confers resistance to bacitracin. In Bacillus subtilis (strain 168), this protein is Undecaprenyl-diphosphatase.